We begin with the raw amino-acid sequence, 124 residues long: Fluoride-specific ion channel FluC (124 aa).

4 consecutive transmembrane segments (helical) span residues 4-24, 32-52, 67-87, and 101-121; these read VLYI…LSGW, AFPY…GLIM, IGLT…SYET, and ANVL…IIVA. Residues Gly-75 and Thr-78 each coordinate Na(+).

The protein belongs to the fluoride channel Fluc/FEX (TC 1.A.43) family.

The protein resides in the cell inner membrane. The catalysed reaction is fluoride(in) = fluoride(out). With respect to regulation, na(+) is not transported, but it plays an essential structural role and its presence is essential for fluoride channel function. In terms of biological role, fluoride-specific ion channel. Important for reducing fluoride concentration in the cell, thus reducing its toxicity. This Geotalea uraniireducens (strain Rf4) (Geobacter uraniireducens) protein is Fluoride-specific ion channel FluC.